The chain runs to 719 residues: Photosystem I P700 chlorophyll a apoprotein A1 (719 aa).

A run of 8 helical transmembrane segments spans residues 61–84 (VFSA…FHGA), 147–170 (LYCT…FHYH), 186–210 (LNHH…HVSL), 282–300 (TAHH…GHMY), 337–360 (WHAQ…HHMY), 376–402 (LSLF…IFMV), 424–446 (AIVS…LYIH), and 522–540 (FLVH…LILL). [4Fe-4S] cluster contacts are provided by C564 and C573. 2 consecutive transmembrane segments (helical) span residues 580–601 (HVFL…HFSW) and 655–677 (LSAY…MFLF). Chlorophyll a' is bound at residue H666. Chlorophyll a is bound by residues M674 and Y682. W683 is a binding site for phylloquinone. A helical transmembrane segment spans residues 715-719 (AVGVA).

It belongs to the PsaA/PsaB family. In terms of assembly, the PsaA/B heterodimer binds the P700 chlorophyll special pair and subsequent electron acceptors. PSI consists of a core antenna complex that captures photons, and an electron transfer chain that converts photonic excitation into a charge separation. The eukaryotic PSI reaction center is composed of at least 11 subunits. The cofactor is P700 is a chlorophyll a/chlorophyll a' dimer, A0 is one or more chlorophyll a, A1 is one or both phylloquinones and FX is a shared 4Fe-4S iron-sulfur center..

Its subcellular location is the plastid. The protein resides in the chloroplast thylakoid membrane. It catalyses the reaction reduced [plastocyanin] + hnu + oxidized [2Fe-2S]-[ferredoxin] = oxidized [plastocyanin] + reduced [2Fe-2S]-[ferredoxin]. In terms of biological role, psaA and PsaB bind P700, the primary electron donor of photosystem I (PSI), as well as the electron acceptors A0, A1 and FX. PSI is a plastocyanin-ferredoxin oxidoreductase, converting photonic excitation into a charge separation, which transfers an electron from the donor P700 chlorophyll pair to the spectroscopically characterized acceptors A0, A1, FX, FA and FB in turn. Oxidized P700 is reduced on the lumenal side of the thylakoid membrane by plastocyanin. In Torreya californica (California nutmeg), this protein is Photosystem I P700 chlorophyll a apoprotein A1.